A 182-amino-acid chain; its full sequence is UPF0301 protein NMCC_1249 (182 aa).

This sequence belongs to the UPF0301 (AlgH) family.

This is UPF0301 protein NMCC_1249 from Neisseria meningitidis serogroup C (strain 053442).